We begin with the raw amino-acid sequence, 272 residues long: Acetylglutamate kinase (272 aa).

Substrate contacts are provided by residues Gly-46–Ala-47, Arg-68, and Asn-166.

The protein belongs to the acetylglutamate kinase family. ArgB subfamily.

The protein localises to the cytoplasm. It carries out the reaction N-acetyl-L-glutamate + ATP = N-acetyl-L-glutamyl 5-phosphate + ADP. It functions in the pathway amino-acid biosynthesis; L-arginine biosynthesis; N(2)-acetyl-L-ornithine from L-glutamate: step 2/4. Catalyzes the ATP-dependent phosphorylation of N-acetyl-L-glutamate. The polypeptide is Acetylglutamate kinase (Dehalococcoides mccartyi (strain CBDB1)).